The sequence spans 231 residues: Urease accessory protein UreE (231 aa).

A disordered region spans residues 185 to 231 (VASPLDEPHGSGLHIHGIHSHEEGHSHGDHDHDHSHSHGDHDHDHKH). Positions 203–231 (HSHEEGHSHGDHDHDHSHSHGDHDHDHKH) are enriched in basic and acidic residues.

The protein belongs to the UreE family.

The protein resides in the cytoplasm. Its function is as follows. Involved in urease metallocenter assembly. Binds nickel. Probably functions as a nickel donor during metallocenter assembly. The sequence is that of Urease accessory protein UreE from Yersinia pestis bv. Antiqua (strain Antiqua).